Reading from the N-terminus, the 61-residue chain is Furostanol glycoside 26-O-beta-glucosidase (61 aa).

Asp33 serves as the catalytic Proton donor/acceptor. D-glucose is bound at residue Asp33.

The protein belongs to the glycosyl hydrolase 3 family. As to quaternary structure, monomer. Glycosylated. As to expression, expressed in petioles and leaves, but not in fruits.

The enzyme catalyses protodioscin + H2O = 26-deglucoprotodioscin + D-glucose. Inhibited by Hg(2+) and D-glucono-1,5-lactone. Functionally, beta-glucosidase highly specific for the cleavage of C-26-bound glucose moiety of furostanol glycosides torvosides A and H. Hydrolyzes only p-nitrophenyl-beta-glucoside, but not p-nitrophenyl-beta-D-fucoside, p-nitrophenyl-beta-L-fucoside, p-nitrophenyl-beta-D-xyloside, p-nitrophenyl-beta-D-galactoside, p-nitrophenyl-beta-D-NAc-glucosamine, p-nitrophenyl-beta-D-mannoside or any of the p-nitrophenyl-alpha-glycosides tested. The chain is Furostanol glycoside 26-O-beta-glucosidase from Solanum torvum (Turkey berry).